A 234-amino-acid polypeptide reads, in one-letter code: Uridylate kinase (234 aa).

ATP is bound at residue 9–12 (KLSG). UMP is bound at residue Gly-51. Positions 52 and 56 each coordinate ATP. Residues Asp-71 and 132–139 (CGNPFFTT) contribute to the UMP site. Residues Thr-159, Tyr-165, and Asp-168 each coordinate ATP.

The protein belongs to the UMP kinase family. Homohexamer.

It localises to the cytoplasm. The enzyme catalyses UMP + ATP = UDP + ADP. It functions in the pathway pyrimidine metabolism; CTP biosynthesis via de novo pathway; UDP from UMP (UMPK route): step 1/1. Its activity is regulated as follows. Inhibited by UTP. Functionally, catalyzes the reversible phosphorylation of UMP to UDP. This is Uridylate kinase from Prochlorococcus marinus (strain MIT 9215).